We begin with the raw amino-acid sequence, 303 residues long: Coenzyme PQQ synthesis protein B (303 aa).

The protein belongs to the PqqB family.

The protein operates within cofactor biosynthesis; pyrroloquinoline quinone biosynthesis. In terms of biological role, may be involved in the transport of PQQ or its precursor to the periplasm. The sequence is that of Coenzyme PQQ synthesis protein B from Acinetobacter baumannii (strain ACICU).